A 217-amino-acid polypeptide reads, in one-letter code: 3-demethoxyubiquinol 3-hydroxylase (217 aa).

Residues Glu-66, Glu-96, His-99, Glu-148, Glu-180, and His-183 each coordinate Fe cation.

The protein belongs to the COQ7 family. It depends on Fe cation as a cofactor.

It is found in the cell membrane. It carries out the reaction a 5-methoxy-2-methyl-3-(all-trans-polyprenyl)benzene-1,4-diol + AH2 + O2 = a 3-demethylubiquinol + A + H2O. Its pathway is cofactor biosynthesis; ubiquinone biosynthesis. Catalyzes the hydroxylation of 2-nonaprenyl-3-methyl-6-methoxy-1,4-benzoquinol during ubiquinone biosynthesis. The polypeptide is 3-demethoxyubiquinol 3-hydroxylase (Xanthomonas oryzae pv. oryzae (strain MAFF 311018)).